We begin with the raw amino-acid sequence, 481 residues long: UDP-glycosyltransferase 72E2 (481 aa).

His-18 (proton acceptor) is an active-site residue. His-18 is an an anthocyanidin binding site. The active-site Charge relay is Asp-111. UDP-alpha-D-glucose contacts are provided by Ala-346, Gln-348, His-363, Trp-366, Ser-368, and Glu-371. Position 386 (Ala-386) interacts with an anthocyanidin. Positions 387 and 388 each coordinate UDP-alpha-D-glucose.

Belongs to the UDP-glycosyltransferase family. Expressed in seedlings and roots.

It catalyses the reaction (E)-4-coumarate + UDP-alpha-D-glucose = 4-O-(beta-D-glucosyl)-trans-4-coumarate + UDP + H(+). The enzyme catalyses (E)-coniferol + UDP-alpha-D-glucose = 4-O-(beta-D-glucosyl)-(E)-coniferol + UDP + H(+). The catalysed reaction is (E)-sinapyl alcohol + UDP-alpha-D-glucose = 4-O-(beta-D-glucosyl)-trans-4-sinapoyl alcohol + UDP + H(+). It carries out the reaction (E)-sinapate + UDP-alpha-D-glucose = 4-O-(beta-D-glucosyl)-trans-sinapate + UDP + H(+). It catalyses the reaction (E)-coniferaldehyde + UDP-alpha-D-glucose = 4-O-(beta-D-glucosyl)-4-(E)-coniferyl aldehyde + UDP + H(+). The enzyme catalyses (E)-sinapaldehyde + UDP-alpha-D-glucose = 4-O-(beta-D-glucosyl)-4-trans-sinapoyl aldehyde + UDP + H(+). Involved in the O-glucosylation of monolignols (alcohol monomers of lignin). Glucosylates coniferyl alcohol to form coniferyl alcohol 4-O-glucoside. Glucosylates sinapyl alcohol to form sinapyl alcohol 4-O-glucoside. Glucosylates coniferyl aldehyde to form coniferyl aldehyde 4-O-glucoside. Glucosylates sinapyl aldehyde to form sinapyl aldehyde 4-O-glucoside. Possesses low activity with sinapate and ferulate as substrates. This Arabidopsis thaliana (Mouse-ear cress) protein is UDP-glycosyltransferase 72E2.